We begin with the raw amino-acid sequence, 503 residues long: Pentatricopeptide repeat-containing protein At2g30100, chloroplastic (503 aa).

Residues 1 to 50 (MAYAHVFASLTISTISLRRFLPRLHRNHSVKPNSRIICNLKLNYSAGKFR) constitute a chloroplast transit peptide. PPR repeat units lie at residues 341–375 (IGVV…GREP), 376–410 (EADL…GSQR), and 411–445 (KKKT…GLHP).

Belongs to the PPR family. P subfamily.

The protein resides in the plastid. The protein localises to the chloroplast. In Arabidopsis thaliana (Mouse-ear cress), this protein is Pentatricopeptide repeat-containing protein At2g30100, chloroplastic.